The sequence spans 508 residues: Lysine--tRNA ligase (508 aa).

Residues Glu418 and Glu425 each coordinate Mg(2+).

This sequence belongs to the class-II aminoacyl-tRNA synthetase family. Homodimer. Mg(2+) serves as cofactor.

Its subcellular location is the cytoplasm. The catalysed reaction is tRNA(Lys) + L-lysine + ATP = L-lysyl-tRNA(Lys) + AMP + diphosphate. The protein is Lysine--tRNA ligase of Burkholderia pseudomallei (strain K96243).